The following is a 429-amino-acid chain: Cytochrome P450 BJ-3 (429 aa).

Position 376 (Cys376) interacts with heme.

Belongs to the cytochrome P450 family. The cofactor is heme.

Cytochromes P450 are a group of heme-thiolate monooxygenases. They oxidize a variety of structurally unrelated compounds, including steroids, fatty acids, and xenobiotics. The protein is Cytochrome P450 BJ-3 (cyp114) of Bradyrhizobium diazoefficiens (strain JCM 10833 / BCRC 13528 / IAM 13628 / NBRC 14792 / USDA 110).